A 322-amino-acid polypeptide reads, in one-letter code: Uridylate-specific endoribonuclease EndoU (322 aa).

A helical transmembrane segment spans residues 25 to 45 (FVIVGLLITIGILSWHFYEYF). The EndoU domain maps to 53–322 (TPDDVLTLSK…LIGTVYPDSS (270 aa)). Catalysis depends on residues histidine 200, histidine 215, and lysine 259.

The protein belongs to the ENDOU family. Monomer. The cofactor is Mn(2+). Predominantly expressed in head.

The protein resides in the membrane. It carries out the reaction a ribonucleotidyl-ribonucleotide-RNA = a 3'-end 2',3'-cyclophospho-ribonucleotide-RNA + a 5'-end dephospho-ribonucleoside-RNA. In terms of biological role, endoribonuclease that cleaves single-stranded RNAs at uridylates and releases products that have 2'-3'-cyclic phosphate termini. Preferentially cleaves single stranded RNA at poly-U sites with CU, UC and AU sites cleaved less efficiently. May target mRNAs encoding proteins involved in lipid metabolism to regulate their expression. Regulates levels of TBPH protein, but not mRNA, by an as yet unknown mechanism. Important for neuronal development or function. The polypeptide is Uridylate-specific endoribonuclease EndoU (Drosophila melanogaster (Fruit fly)).